The primary structure comprises 341 residues: Lipoyl synthase (341 aa).

[4Fe-4S] cluster is bound by residues Cys85, Cys90, Cys96, Cys111, Cys115, Cys118, and Ser325. One can recognise a Radical SAM core domain in the interval 97–314; the sequence is FSGGTATFMI…AEEGYKMGFK (218 aa).

Belongs to the radical SAM superfamily. Lipoyl synthase family. [4Fe-4S] cluster serves as cofactor.

It is found in the cytoplasm. The catalysed reaction is [[Fe-S] cluster scaffold protein carrying a second [4Fe-4S](2+) cluster] + N(6)-octanoyl-L-lysyl-[protein] + 2 oxidized [2Fe-2S]-[ferredoxin] + 2 S-adenosyl-L-methionine + 4 H(+) = [[Fe-S] cluster scaffold protein] + N(6)-[(R)-dihydrolipoyl]-L-lysyl-[protein] + 4 Fe(3+) + 2 hydrogen sulfide + 2 5'-deoxyadenosine + 2 L-methionine + 2 reduced [2Fe-2S]-[ferredoxin]. It functions in the pathway protein modification; protein lipoylation via endogenous pathway; protein N(6)-(lipoyl)lysine from octanoyl-[acyl-carrier-protein]: step 2/2. Functionally, catalyzes the radical-mediated insertion of two sulfur atoms into the C-6 and C-8 positions of the octanoyl moiety bound to the lipoyl domains of lipoate-dependent enzymes, thereby converting the octanoylated domains into lipoylated derivatives. In Pseudomonas fluorescens (strain SBW25), this protein is Lipoyl synthase.